A 377-amino-acid chain; its full sequence is ASTRA-associated protein 1 (377 aa).

5 WD repeats span residues 10–50, 53–91, 230–262, 263–303, and 342–377; these read SHKS…PKKS, AHTD…LEIP, QYHN…KVII, HSDP…GDIS, and PTGK…AYNI.

Belongs to the WD repeat ASA1 family. In terms of assembly, component of the ASTRA chromatin remodeling machinery complex.

It is found in the nucleus. Functionally, component of the ASTRA complex involved in chromatin remodeling. This is ASTRA-associated protein 1 (ASA1) from Candida albicans (strain WO-1) (Yeast).